The primary structure comprises 2543 residues: MHHPFGKEETASQKQLFGFFCECLRRGEWELAQACVPQLHEAQGDIPKKVEDILQALVVCPDQLRCGQDIDPQRLAWVWFLVLEKWFSQEKKLLPSVFRRKLEFLLLSEDLRRDIPEDILKELYEALAQDTGGPVLDGNQKRESWTPRLSSEAVSVFWDLLRQAPQLAQALLELLRTKDDSAGLSGWSLQKALVDRVRRALGAVQGPTTGPAGIVDAIYGALRSLRCPAEPLGGELRLLCEELLEACRAEGSPLQEEQVLSCLLHKAGRSLVSLYGHIYAEKATEKPAKAVHLGKVSPDHLDPEQAMLALFCNPDPSQAWKSAYFYCLSNSKHFLEQILVTALALLKEEDFPSLGCLLDREFRPLSRLLVLLGWMHCQSLASAKRLLQTLHRAQDQGCDKLLRDACDGLWAHLEVLEWCVQQSSNPIPKRDLLCHLHGGDSHSVLYSLHHLTNLPALREEDVLKLLQKVPAKDPQQEQDSAEAPVPEHLSRCQNLTLYQSFCAMKYAIYALCVNSHQHSQCQECRDSPSEDPALAAEPANDSLSSPGASDLFSTYLARCQQYLCNVPDSLCLELLENIFSLLLITSADLHPEPHLPEDYAEDEDIEGKGLLGLRSPSESPQHIAQPERKSEQGCQEVPRSLACTVPNCLKTEPKESSPGLHGHSFLDLKHFTSGISGFLADEFAIGAFFRLLQEQLDKLSSHSPPEKPKLPEGQSCSGSRDGLQSRLHRFSKVLSEAQWRYKVVTSNQGSEEQPSRRYWPIATGHPSLRRGRRTRRSRPDGRDRSSNPSLESTSSELSTSTSEGSLNAVSGRNELDGRLQPQSQNSLIPMMFSPPESLLASCILRGNFAEAHQVVFMFNLKSSPSSGELMFMERYQEVIQELSRVEHKIENQNSDGGSSTIRRTGSGRSTLQAIGSAAAAGMVFYSISDVTDKLLSTSGEPIPTLQEDFWISNTLVEPTAPLREVLEDLSPPAMAAFDLACSQCQLWKTCKQLLETAERRLNVSLESRGRRLDHILLSADGIRGFPVVLQQISKILNYPLTSAGQSKSESVEEKGAGPPRCSIAELLQMCWPSLTEDCVASHATLSQQLDQVLQVLREALQRPEPRSTPLSSLVEQAAQKAPEAEAHPVHIQTQLLQKNLGKQTPAGSRQTDYMGTFFSYCNTMAAVLLRSLSSEPDHMEVKVGNPFVLLQQSSSQLVSHLLLERQVPPDRLAALLAREGLSLSVPKVIVNCCCEPLALCSSRQSQQTSSLLTHLDVLVQLHTSHCLEDLPLSTLSSPKPTGNSTLERKPHSSPRDSSLPAFTSSALAFLKSRSKLLATVACLGASQGPKLTKPSLSWKELRGRREVPLSAEQVAQECERLLEQFPMLKASLLAAWEPLRRSTEQGQSLAVSLCGRASLSTVLLGLHSPSALDVLTEAFEEALVARDWSRALQLTEVYGRDVDDLSNIKDAVLSCATACDKEGWRFLFPVKDASLRSRLTLQFVDRWPLEWCLEILAYCISDTAVQGGLKCELQRKLAELRVYQKILGLQATPVWCDWQSLRNCCIEDPSAVMNMILEAKEYGLCEEWGCLYPIPREHLISLHQKHLLHLLERGDHEKALQLLRKIPDPTMCLEVTEQSLDQHPSLAASHFLANYLTTHFYGELTAVRHHEIQALYMGSKVLLTLPEPHRASYSHLSSNPLLMLEQLLMNMKVDWATVAVQTLHQLLAGQEIGFTMDDIDSLLSIYAGKALDFPYSLREKRSDSLTHLQEVSQPSDLVTLSRSPSGEFSVAAAVAAPGVSTIHSPSPRERSFPESQPPPEFVPPATPPGRPQWVPDESASICMVCCRERFTMFNRRHHCRRCGRLVCSACSTKKMVVEGCRESPTRVCDQCYSYYNKDVPEENAGQPEAPDSSKSESPPYSAVVRVPKAAEVEWILDLNEEENELVRSEFYYEQSPSASLCIAILNLHRDSIACGHQLIEHCCRLSQGLTNPEVDAGLLTDIMKQLLFSAKMMFVKAGRSQDLALCDSYISKVDVLNILVAASYRHVPPLDQILQPAAVTRLRNQLLEAEYYQLGVEISTKTGLDPTGAWHAWGMACLKAGNLTAAREKFGRCLKPPFDLNQLSHGSRLVQDVVEYLESTVRPLLSLQDDDYFATLKELEATLRTQSLSLEVIPEGKIMNNTYYQECLFYLHNYSTNLAIISFYMRHSCMREALLHLLNKESPPEVFIEGIFQPSYKSGKLHTLENLLESIDPTLETWGKYLIAACQHLQKKNYYHILYELQQFMKDQVRAAMTCIRFFSHKAKTYTELGEKLSWLLKAKDHLKIYLQDTSRSTRRKKTTFFQKKMTAADVSRHMNTLQLQMEVTRFLHRCESAGTSQITTLPLPTLFGNNHMKMDVACKVMLGGKNVEDGFGIAFRVLQDFQLDAAATYCRAARQLVEREKYSEIQQLLKCVSESGMAATSDGDTILLNCLEAFKRIPPQELEGLIQAIHSDDNKVQAYLTCCKLRSAYLIAVKQEHSRATVLVQQVQQAAKSSGDAVVQDICAQWLLTSHTRGSHGSGSRK.

S297 carries the phosphoserine modification. Disordered stretches follow at residues 523–545 (ECRD…SLSS), 609–636 (GLLG…GCQE), 699–722 (LSSH…SRDG), and 744–820 (VTSN…GRLQ). 3 positions are modified to phosphoserine: S615, S619, and S703. Basic and acidic residues predominate over residues 699 to 710 (LSSHSPPEKPKL). The span at 767 to 776 (SLRRGRRTRR) shows a compositional bias: basic residues. Residues 786-806 (SNPSLESTSSELSTSTSEGSL) are compositionally biased toward low complexity. S802 carries the phosphoserine modification. Positions 870–897 (MFMERYQEVIQELSRVEHKIENQNSDGG) form a coiled coil. A disordered region spans residues 1272–1299 (LSTLSSPKPTGNSTLERKPHSSPRDSSL). Polar residues predominate over residues 1273 to 1285 (STLSSPKPTGNST). S1744, S1765, S1784, and S1786 each carry phosphoserine. The tract at residues 1780–1812 (STIHSPSPRERSFPESQPPPEFVPPATPPGRPQ) is disordered. Over residues 1795 to 1810 (SQPPPEFVPPATPPGR) the composition is skewed to pro residues. The segment at 1816–1876 (DESASICMVC…VCDQCYSYYN (61 aa)) adopts an FYVE-type zinc-finger fold. Positions 1822, 1825, 1839, 1842, 1847, 1850, 1868, and 1871 each coordinate Zn(2+).

The protein belongs to the ZFYVE26 family. In terms of assembly, interacts with AP5Z1, AP5B1, AP5S1 and SPG11. Interacts with TTC19 and KIF13A.

The protein localises to the cytoplasm. It localises to the cytoskeleton. Its subcellular location is the microtubule organizing center. It is found in the centrosome. The protein resides in the midbody. Phosphatidylinositol 3-phosphate-binding protein required for the abscission step in cytokinesis: recruited to the midbody during cytokinesis and acts as a regulator of abscission. May also be required for efficient homologous recombination DNA double-strand break repair. This chain is Zinc finger FYVE domain-containing protein 26 (ZFYVE26), found in Ailuropoda melanoleuca (Giant panda).